The sequence spans 469 residues: MSAVMTPAEFNDYKVADISLAAWGRRETIIAESEMPALMGLRRKYAGDQPLKGAKILGCIHMTIQTAVLIETLVALGAEVRWSSCNIFSTQDQAAAAIAAAGIPVFAWKGETEEEYEWCIEQTILKDGQPWDANMILDDGGDLTEIIHKKYPAMLDKIHGVTEETTTGVHRLLDMLAKGELKIPAINVNDSVTKSKNDNKYGCRHSLNDAIKRGTDHLLSGKQALVIGYGDVGKGSAQSLRQEGMIVKVTEVDPICAMQACMDGFELVSPFIDGENDGTEASIDKALLGKIDLIVTTTGNVNVCDSNMLKALKKRAVVCNIGHFDNEIDTAFMRKNWAWEEVKPQVHKIHRTGPGSFDAQNDDYLILLAEGRLVNLGNATGHPSRIMDGSFANQVLAQIFLFEQKYADLAPAKKSERLTVEVLPKKLDEEVALEMVRGFGGVVTKLTKTQADYIGVTVEGPFKPDAYRY.

Threonine 63, aspartate 139, and glutamate 164 together coordinate substrate. 165–167 is a binding site for NAD(+); sequence TTT. 2 residues coordinate substrate: lysine 194 and aspartate 198. NAD(+)-binding positions include asparagine 199, 228-233, glutamate 251, asparagine 300, 321-323, and asparagine 375; these read GYGDVG and IGH.

It belongs to the adenosylhomocysteinase family. NAD(+) serves as cofactor.

The protein resides in the cytoplasm. The enzyme catalyses S-adenosyl-L-homocysteine + H2O = L-homocysteine + adenosine. Its pathway is amino-acid biosynthesis; L-homocysteine biosynthesis; L-homocysteine from S-adenosyl-L-homocysteine: step 1/1. Its function is as follows. May play a key role in the regulation of the intracellular concentration of adenosylhomocysteine. The chain is Adenosylhomocysteinase from Pseudomonas syringae pv. syringae (strain B728a).